A 154-amino-acid chain; its full sequence is SsrA-binding protein (154 aa).

The segment at 132 to 154 (KRESIKKRQDKRDMERALKRGAE) is disordered.

Belongs to the SmpB family.

The protein localises to the cytoplasm. In terms of biological role, required for rescue of stalled ribosomes mediated by trans-translation. Binds to transfer-messenger RNA (tmRNA), required for stable association of tmRNA with ribosomes. tmRNA and SmpB together mimic tRNA shape, replacing the anticodon stem-loop with SmpB. tmRNA is encoded by the ssrA gene; the 2 termini fold to resemble tRNA(Ala) and it encodes a 'tag peptide', a short internal open reading frame. During trans-translation Ala-aminoacylated tmRNA acts like a tRNA, entering the A-site of stalled ribosomes, displacing the stalled mRNA. The ribosome then switches to translate the ORF on the tmRNA; the nascent peptide is terminated with the 'tag peptide' encoded by the tmRNA and targeted for degradation. The ribosome is freed to recommence translation, which seems to be the essential function of trans-translation. In Acaryochloris marina (strain MBIC 11017), this protein is SsrA-binding protein.